Reading from the N-terminus, the 79-residue chain is Putative membrane protein insertion efficiency factor (79 aa).

The protein belongs to the UPF0161 family.

Its subcellular location is the cell inner membrane. Could be involved in insertion of integral membrane proteins into the membrane. The chain is Putative membrane protein insertion efficiency factor from Bacteroides thetaiotaomicron (strain ATCC 29148 / DSM 2079 / JCM 5827 / CCUG 10774 / NCTC 10582 / VPI-5482 / E50).